Consider the following 286-residue polypeptide: Transcription factor bHLH11 (286 aa).

A disordered region spans residues 1 to 34 (MDQPMKPKTCSESDFADDSSASSSSSSGQNLRGA). Positions 18–27 (DSSASSSSSS) are enriched in low complexity. Positions 44–94 (AVCSQKAEREKLRRDKLKEQFLELGNALDPNRPKSDKASVLTDTIQMLKDV) constitute a bHLH domain. Disordered regions lie at residues 182–202 (EQQA…MKQD) and 244–286 (QQDV…MLKP). Composition is skewed to low complexity over residues 183–198 (QQAS…ADAS) and 255–269 (SLTT…YSLS). A compositionally biased stretch (polar residues) spans 270 to 279 (QAVQDSSPGT).

Homodimer. As to expression, expressed consitutively in roots, leaves, stems, and flowers.

Its subcellular location is the nucleus. The sequence is that of Transcription factor bHLH11 (BHLH11) from Arabidopsis thaliana (Mouse-ear cress).